The sequence spans 681 residues: U3 small nucleolar ribonucleoprotein protein MPP10 (681 aa).

A phosphoserine mark is found at S61, S120, and S139. Positions 105–147 are enriched in acidic residues; sequence SLLPESEEQEREEDGSEIEADDKEDLEDLEEEEVSDMGNDDPE. Disordered stretches follow at residues 105–202 and 216–364; these read SLLP…IVDD and NIEK…EKRQ. The stretch at 109 to 138 forms a coiled coil; that stretch reads ESEEQEREEDGSEIEADDKEDLEDLEEEEV. Positions 148 to 162 are enriched in basic and acidic residues; sequence MGERAENSSKSDLRK. A phosphoserine mark is found at S163, S167, and S171. Positions 180–190 are enriched in polar residues; the sequence is LEQQSKVQNKG. Composition is skewed to basic and acidic residues over residues 193 to 202 and 216 to 226; these read KPREKSIVDD and NIEKEEERKDD. Residues 205–239 are a coiled coil; sequence FKLSEMEAYLENIEKEEERKDDNDEEEEDIDFFED. A compositionally biased stretch (acidic residues) spans 227–247; that stretch reads NDEEEEDIDFFEDIDSDEDEG. Phosphoserine is present on S242. A compositionally biased stretch (basic residues) spans 253–264; it reads KKLKSGKSSRNL. A phosphoserine mark is found at S275 and S289. Residues 280 to 290 are compositionally biased toward basic and acidic residues; that stretch reads TNVHDDELDSN. 2 coiled-coil regions span residues 284–324 and 348–382; these read DDEL…NKQH and NVKK…LEKK. Over residues 291-318 the composition is skewed to acidic residues; sequence KEDDEIAEEEAEELSISETDEDDDLQEN. Basic and acidic residues predominate over residues 319–329; the sequence is EDNKQHKESLK. K350 participates in a covalent cross-link: Glycyl lysine isopeptide (Lys-Gly) (interchain with G-Cter in SUMO2). A compositionally biased stretch (basic and acidic residues) spans 351 to 364; that stretch reads KNSDEVKSSFEKRQ. Residues K382 and K394 each participate in a glycyl lysine isopeptide (Lys-Gly) (interchain with G-Cter in SUMO2) cross-link. The stretch at 469-490 forms a coiled coil; sequence LAEIYEQEYIKLNQQKTAEEEN. A Glycyl lysine isopeptide (Lys-Gly) (interchain with G-Cter in SUMO2) cross-link involves residue K555. Over residues 558 to 575 the composition is skewed to basic and acidic residues; sequence NKAGDIKTAAEKTATDKK. A disordered region spans residues 558-606; the sequence is NKAGDIKTAAEKTATDKKRERRKKKYQKRMKIKEKEKRRKLLEKSSVDQ. The stretch at 574–604 forms a coiled coil; that stretch reads KKRERRKKKYQKRMKIKEKEKRRKLLEKSSV. Residues 576–598 show a composition bias toward basic residues; that stretch reads RERRKKKYQKRMKIKEKEKRRKL. At K609 the chain carries N6-acetyllysine. Glycyl lysine isopeptide (Lys-Gly) (interchain with G-Cter in SUMO2) cross-links involve residues K632 and K649. A coiled-coil region spans residues 648–670; it reads SKLQDQVKMQINDAKKTEKKKKK. Positions 660 to 681 are disordered; sequence DAKKTEKKKKKRQDISVHKLKL. Residues 672-681 are compositionally biased toward basic and acidic residues; it reads QDISVHKLKL.

The protein belongs to the MPP10 family. As to quaternary structure, part of the small subunit (SSU) processome, composed of more than 70 proteins and the RNA chaperone small nucleolar RNA (snoRNA) U3. Component of a heterotrimeric complex containing IMP3, IMP4 and MPHOSPH10. Interacts with IMP3 and IMP4. Post-translationally, phosphorylated in M (mitotic) phase.

Its subcellular location is the nucleus. It is found in the nucleolus. The protein localises to the chromosome. Its function is as follows. Component of the 60-80S U3 small nucleolar ribonucleoprotein (U3 snoRNP). Required for the early cleavages during pre-18S ribosomal RNA processing. Part of the small subunit (SSU) processome, first precursor of the small eukaryotic ribosomal subunit. During the assembly of the SSU processome in the nucleolus, many ribosome biogenesis factors, an RNA chaperone and ribosomal proteins associate with the nascent pre-rRNA and work in concert to generate RNA folding, modifications, rearrangements and cleavage as well as targeted degradation of pre-ribosomal RNA by the RNA exosome. In Homo sapiens (Human), this protein is U3 small nucleolar ribonucleoprotein protein MPP10.